The chain runs to 46 residues: Protein YpdJ (46 aa).

Functionally, may be involved in H(2) production during fermentative growth. This chain is Protein YpdJ (ypdJ), found in Escherichia coli (strain K12).